We begin with the raw amino-acid sequence, 185 residues long: UPF0301 protein MS0260 (185 aa).

It belongs to the UPF0301 (AlgH) family.

The sequence is that of UPF0301 protein MS0260 from Mannheimia succiniciproducens (strain KCTC 0769BP / MBEL55E).